The following is a 213-amino-acid chain: 3,4-dihydroxy-2-butanone 4-phosphate synthase (213 aa).

Residues 37-38 (RE), aspartate 42, 150-154 (RAGHT), and glutamate 174 each bind D-ribulose 5-phosphate. Residue glutamate 38 participates in Mg(2+) binding. Residue histidine 153 coordinates Mg(2+).

The protein belongs to the DHBP synthase family. In terms of assembly, homodimer. Requires Mg(2+) as cofactor. It depends on Mn(2+) as a cofactor.

The enzyme catalyses D-ribulose 5-phosphate = (2S)-2-hydroxy-3-oxobutyl phosphate + formate + H(+). The protein operates within cofactor biosynthesis; riboflavin biosynthesis; 2-hydroxy-3-oxobutyl phosphate from D-ribulose 5-phosphate: step 1/1. Functionally, catalyzes the conversion of D-ribulose 5-phosphate to formate and 3,4-dihydroxy-2-butanone 4-phosphate. In Wigglesworthia glossinidia brevipalpis, this protein is 3,4-dihydroxy-2-butanone 4-phosphate synthase.